We begin with the raw amino-acid sequence, 454 residues long: UDP-N-acetylmuramoylalanine--D-glutamate ligase (454 aa).

ATP is bound at residue 115 to 121; sequence GTNGKTT.

This sequence belongs to the MurCDEF family.

It localises to the cytoplasm. The catalysed reaction is UDP-N-acetyl-alpha-D-muramoyl-L-alanine + D-glutamate + ATP = UDP-N-acetyl-alpha-D-muramoyl-L-alanyl-D-glutamate + ADP + phosphate + H(+). It functions in the pathway cell wall biogenesis; peptidoglycan biosynthesis. In terms of biological role, cell wall formation. Catalyzes the addition of glutamate to the nucleotide precursor UDP-N-acetylmuramoyl-L-alanine (UMA). The chain is UDP-N-acetylmuramoylalanine--D-glutamate ligase from Thermoanaerobacter sp. (strain X514).